The sequence spans 722 residues: Polyribonucleotide nucleotidyltransferase (722 aa).

Residues D495 and D501 each coordinate Mg(2+). The region spanning 562–621 is the KH domain; it reads PRLLSFRIDPELIGTVIGPGGRTIKGITERTNTKIDIEDGGIVTIASHDGVAAEEAQKII. The region spanning 631-699 is the S1 motif domain; sequence GEVFTGSITR…NRGRINLTLR (69 aa).

This sequence belongs to the polyribonucleotide nucleotidyltransferase family. Requires Mg(2+) as cofactor.

The protein localises to the cytoplasm. It carries out the reaction RNA(n+1) + phosphate = RNA(n) + a ribonucleoside 5'-diphosphate. Functionally, involved in mRNA degradation. Catalyzes the phosphorolysis of single-stranded polyribonucleotides processively in the 3'- to 5'-direction. The sequence is that of Polyribonucleotide nucleotidyltransferase from Prochlorococcus marinus (strain SARG / CCMP1375 / SS120).